The sequence spans 516 residues: Bifunctional pantoate ligase/cytidylate kinase (516 aa).

Positions 1–279 (MVRKIFQTNA…CGSTRLIDHT (279 aa)) are pantoate--beta-alanine ligase. 29–36 (MGGLHPGH) contributes to the ATP binding site. H36 serves as the catalytic Proton donor. Q64 serves as a coordination point for (R)-pantoate. Position 64 (Q64) interacts with beta-alanine. 153 to 156 (GEKD) provides a ligand contact to ATP. Q159 is a (R)-pantoate binding site. Residue 190 to 193 (YSSR) participates in ATP binding. Positions 280-516 (FLMHRKPIIA…PEEVWPTPNS (237 aa)) are cytidylate kinase.

The protein in the N-terminal section; belongs to the pantothenate synthetase family. It in the C-terminal section; belongs to the cytidylate kinase family. Type 1 subfamily.

It localises to the cytoplasm. It carries out the reaction (R)-pantoate + beta-alanine + ATP = (R)-pantothenate + AMP + diphosphate + H(+). It catalyses the reaction CMP + ATP = CDP + ADP. The catalysed reaction is dCMP + ATP = dCDP + ADP. It functions in the pathway cofactor biosynthesis; (R)-pantothenate biosynthesis; (R)-pantothenate from (R)-pantoate and beta-alanine: step 1/1. In terms of biological role, catalyzes the condensation of pantoate with beta-alanine in an ATP-dependent reaction via a pantoyl-adenylate intermediate. Catalyzes the transfer of a phosphate group from ATP to either CMP or dCMP to form CDP or dCDP and ADP, respectively. The chain is Bifunctional pantoate ligase/cytidylate kinase from Prochlorococcus marinus (strain NATL2A).